Consider the following 336-residue polypeptide: Flavonoid 6-O-methyltransferase 4 (336 aa).

S-adenosyl-L-methionine-binding residues include Tyr140 and Asp203. His241 (proton acceptor) is an active-site residue.

The protein belongs to the class I-like SAM-binding methyltransferase superfamily. Cation-independent O-methyltransferase family. As to quaternary structure, homodimer. In terms of tissue distribution, expressed in leaves.

It catalyses the reaction ladanein + S-adenosyl-L-methionine = salvigenin + S-adenosyl-L-homocysteine + H(+). It carries out the reaction scutellarein 7-methyl ether + S-adenosyl-L-methionine = cirsimaritin + S-adenosyl-L-homocysteine + H(+). Its pathway is flavonoid metabolism. Functionally, flavonoid 6-O-methyltransferase involved in the biosynthesis of polymethoxylated flavonoids natural products such as nevadensin and salvigenin (SALV), aroma compounds which contribute to the flavor of sweet basil, and exhibit pharmacological activities such as anti-allergic, anti-oxidant, antibacterial, anti-proliferative, and anti-inflammatory effects. Catalyzes S-adenosylmethionine-dependent regioselective 6-O-methylation of flavonoids; active on various hydroxylated flavonoid substrates, including scutellarein-7-methyl ether (SCU7Me) and ladanein (LAD). The chain is Flavonoid 6-O-methyltransferase 4 from Ocimum basilicum (Sweet basil).